Here is a 188-residue protein sequence, read N- to C-terminus: Transcription factor FapR (188 aa).

It belongs to the FapR family.

Functionally, transcriptional factor involved in regulation of membrane lipid biosynthesis by repressing genes involved in fatty acid and phospholipid metabolism. The chain is Transcription factor FapR from Bacillus licheniformis (strain ATCC 14580 / DSM 13 / JCM 2505 / CCUG 7422 / NBRC 12200 / NCIMB 9375 / NCTC 10341 / NRRL NRS-1264 / Gibson 46).